A 442-amino-acid polypeptide reads, in one-letter code: Serine--tRNA ligase (442 aa).

244-246 (TAE) lines the L-serine pocket. 275-277 (RAE) contacts ATP. An L-serine-binding site is contributed by Glu298. 365–368 (EISS) contacts ATP. Ser400 contacts L-serine.

Belongs to the class-II aminoacyl-tRNA synthetase family. Type-1 seryl-tRNA synthetase subfamily. In terms of assembly, homodimer. The tRNA molecule binds across the dimer.

It localises to the cytoplasm. The catalysed reaction is tRNA(Ser) + L-serine + ATP = L-seryl-tRNA(Ser) + AMP + diphosphate + H(+). The enzyme catalyses tRNA(Sec) + L-serine + ATP = L-seryl-tRNA(Sec) + AMP + diphosphate + H(+). It functions in the pathway aminoacyl-tRNA biosynthesis; selenocysteinyl-tRNA(Sec) biosynthesis; L-seryl-tRNA(Sec) from L-serine and tRNA(Sec): step 1/1. Catalyzes the attachment of serine to tRNA(Ser). Is also able to aminoacylate tRNA(Sec) with serine, to form the misacylated tRNA L-seryl-tRNA(Sec), which will be further converted into selenocysteinyl-tRNA(Sec). The sequence is that of Serine--tRNA ligase from Bradyrhizobium sp. (strain ORS 278).